Here is a 602-residue protein sequence, read N- to C-terminus: Elongation factor 4 (602 aa).

In terms of domain architecture, tr-type G spans 6–188 (KYIRNFCIIA…AIIRRVPPPR (183 aa)). Residues 18–23 (DHGKST) and 135–138 (NKID) each bind GTP.

It belongs to the TRAFAC class translation factor GTPase superfamily. Classic translation factor GTPase family. LepA subfamily.

The protein resides in the cell membrane. The catalysed reaction is GTP + H2O = GDP + phosphate + H(+). Required for accurate and efficient protein synthesis under certain stress conditions. May act as a fidelity factor of the translation reaction, by catalyzing a one-codon backward translocation of tRNAs on improperly translocated ribosomes. Back-translocation proceeds from a post-translocation (POST) complex to a pre-translocation (PRE) complex, thus giving elongation factor G a second chance to translocate the tRNAs correctly. Binds to ribosomes in a GTP-dependent manner. This is Elongation factor 4 from Moorella thermoacetica (strain ATCC 39073 / JCM 9320).